Here is a 183-residue protein sequence, read N- to C-terminus: Orotate phosphoribosyltransferase (183 aa).

Residues arginine 90, lysine 91, lysine 94, and 115-123 (DDVATTGGS) each bind 5-phospho-alpha-D-ribose 1-diphosphate. The orotate site is built by threonine 119 and arginine 147.

The protein belongs to the purine/pyrimidine phosphoribosyltransferase family. PyrE subfamily. As to quaternary structure, homodimer. Mg(2+) is required as a cofactor.

The catalysed reaction is orotidine 5'-phosphate + diphosphate = orotate + 5-phospho-alpha-D-ribose 1-diphosphate. It participates in pyrimidine metabolism; UMP biosynthesis via de novo pathway; UMP from orotate: step 1/2. In terms of biological role, catalyzes the transfer of a ribosyl phosphate group from 5-phosphoribose 1-diphosphate to orotate, leading to the formation of orotidine monophosphate (OMP). The chain is Orotate phosphoribosyltransferase from Methanopyrus kandleri (strain AV19 / DSM 6324 / JCM 9639 / NBRC 100938).